The primary structure comprises 379 residues: Orotidine 5'-phosphate decarboxylase (379 aa).

Substrate is bound by residues Asp42, 64–66, and 99–108; these read KTH and DRKFGDIGHT. The active-site Proton donor is the Lys101. Positions 165–198 are disordered; it reads PTMDQFDDAEDAKDDEPATVNDNGSNMMEKPIYA. Residues 169–178 show a composition bias toward acidic residues; the sequence is QFDDAEDAKD. Residues Tyr331 and Arg350 each contribute to the substrate site.

It belongs to the OMP decarboxylase family.

The enzyme catalyses orotidine 5'-phosphate + H(+) = UMP + CO2. It participates in pyrimidine metabolism; UMP biosynthesis via de novo pathway; UMP from orotate: step 2/2. This chain is Orotidine 5'-phosphate decarboxylase (pyr4), found in Hypocrea atroviridis (Trichoderma atroviride).